The chain runs to 214 residues: ER lumen protein-retaining receptor 3 (214 aa).

At 1 to 4 (MNVF) the chain is on the lumenal side. The helical transmembrane segment at 5-24 (RILGDLSHLLAMILLLVKIW) threads the bilayer. The Cytoplasmic segment spans residues 25–32 (RSKSCAGI). Residues 33–52 (SGKSQILFALVFTTRYLDLF) traverse the membrane as a helical segment. Residues 47–48 (RY) form an interaction with the K-D-E-L motif on target proteins region. At 53–58 (SNFISI) the chain is on the lumenal side. The helical transmembrane segment at 59 to 79 (YNTVMKVVFLLCAYVTVYMIY) threads the bilayer. The Cytoplasmic segment spans residues 80 to 92 (WKFRKTFDIENDT). The helical transmembrane segment at 93-110 (FRLEFLLVPVTGLSFLVN) threads the bilayer. Over 111–116 (YSYTPM) the chain is Lumenal. The chain crosses the membrane as a helical span at residues 117-135 (EVLWTFSIYLESVAILPQL). Residues 136–149 (FMISKTGEAETITT) are Cytoplasmic-facing. Residues 150–168 (HYLFFLGLYRLLYLANWIR) form a helical membrane-spanning segment. The tract at residues 159–169 (RLLYLANWIRR) is interaction with the K-D-E-L motif on target proteins. Over 169 to 178 (RYQTENFYDQ) the chain is Lumenal. The helical transmembrane segment at 179 to 199 (ISVVSGVVQTIFYCDFFYLYV) threads the bilayer. The Cytoplasmic segment spans residues 200 to 214 (TKVLKGKKLSLPVPV). The important for recycling of cargo proteins with the sequence motif K-D-E-L from the Golgi to the endoplasmic reticulum stretch occupies residues 204–207 (KGKK).

The protein belongs to the ERD2 family.

The protein resides in the endoplasmic reticulum membrane. The protein localises to the golgi apparatus membrane. It is found in the cytoplasmic vesicle. It localises to the COPI-coated vesicle membrane. Receptor for the C-terminal sequence motif K-D-E-L that is present on endoplasmic reticulum resident proteins and that mediates their recycling from the Golgi back to the endoplasmic reticulum. This chain is ER lumen protein-retaining receptor 3 (Kdelr3), found in Mus musculus (Mouse).